The chain runs to 644 residues: MSGAGLELDGVWRRFPSGEDEVAVLKNVTLSIAPGEMVAIVGASGSGKSTLMNILGCLDQPSVGRYRVAGQDAGCLDGDQLAALRRGHFGFIFQRYHLLPHLSALDNVAMPAVYAGMALHQRRERARALLARLGLAGKEHHRPGQLSGGQQQRVSIARALMNGGRIILADEPTGALDSHSGEEVMRILKELNAAGHTVIIVTHDPAIAAQTERVIEIRDGEILRDSGAPAREAASQATEAQPDGGPLLRERLAEAFKMAMLAMSANRLRTALTMLGIVIGIASVVSVIAIGEGSRDYVLKGIREMGTQTITVFRGKDWGDDKADGVRTFLPGDVAALEGEGYVDSVTPETAQAQRIRYRNVDVNASVIGVGRDFFRVQGMKLAEGQSFSRDDIHFQRQVVVLDKNSRRKLFGDGEAVGRVILVGMVPATVIGVVAQRDRGFGGNSLQMWMPYSTAASRLFGQQHFDRFVIRVKDGQPTKLAEKAIGALLTQRHGGKDFFTYNMDEILKTVESSSRALSLLLALVAVISLVVGGIGVMNIMLVSVTERTREIGIRMAVGARQGDVLQQFLTEAVLVCLVGGAIGVALSYGVSFVFSLFVTEWKMSLSPPVIALAVACSSLIGVLFGFLPARNAAKLNPIDALARE.

Residues 6 to 244 form the ABC transporter domain; the sequence is LELDGVWRRF…SQATEAQPDG (239 aa). An ATP-binding site is contributed by 42 to 49; that stretch reads GASGSGKS. Helical transmembrane passes span 271–291, 415–435, 517–537, 574–594, and 609–629; these read ALTMLGIVIGIASVVSVIAIG, EAVGRVILVGMVPATVIGVVA, LSLLLALVAVISLVVGGIGVM, LVCLVGGAIGVALSYGVSFVF, and VIALAVACSSLIGVLFGFLPA.

It belongs to the ABC transporter superfamily. Macrolide exporter (TC 3.A.1.122) family. As to quaternary structure, homodimer.

The protein resides in the cell inner membrane. Functionally, non-canonical ABC transporter that contains transmembrane domains (TMD), which form a pore in the inner membrane, and an ATP-binding domain (NBD), which is responsible for energy generation. Confers resistance against macrolides. This Chromobacterium violaceum (strain ATCC 12472 / DSM 30191 / JCM 1249 / CCUG 213 / NBRC 12614 / NCIMB 9131 / NCTC 9757 / MK) protein is Macrolide export ATP-binding/permease protein MacB.